The sequence spans 336 residues: Glyceraldehyde-3-phosphate dehydrogenase (336 aa).

Residues 12 to 13 (RI), aspartate 34, and arginine 79 contribute to the NAD(+) site. D-glyceraldehyde 3-phosphate-binding positions include 150-152 (SCT), threonine 181, 210-211 (TG), and arginine 233. The active-site Nucleophile is cysteine 151. Asparagine 315 is a binding site for NAD(+).

It belongs to the glyceraldehyde-3-phosphate dehydrogenase family. Homotetramer.

It localises to the cytoplasm. It catalyses the reaction D-glyceraldehyde 3-phosphate + phosphate + NAD(+) = (2R)-3-phospho-glyceroyl phosphate + NADH + H(+). The protein operates within carbohydrate degradation; glycolysis; pyruvate from D-glyceraldehyde 3-phosphate: step 1/5. This Aspergillus niger protein is Glyceraldehyde-3-phosphate dehydrogenase (gpdA).